Consider the following 270-residue polypeptide: 4-hydroxy-tetrahydrodipicolinate reductase (270 aa).

NAD(+)-binding positions include 11–16 (GASGRM) and Glu-37. Arg-38 contacts NADP(+). NAD(+)-binding positions include 101–103 (GTT) and 125–128 (APNM). His-158 (proton donor/acceptor) is an active-site residue. His-159 provides a ligand contact to (S)-2,3,4,5-tetrahydrodipicolinate. The active-site Proton donor is the Lys-162. 168–169 (GT) contacts (S)-2,3,4,5-tetrahydrodipicolinate.

It belongs to the DapB family.

The protein localises to the cytoplasm. The enzyme catalyses (S)-2,3,4,5-tetrahydrodipicolinate + NAD(+) + H2O = (2S,4S)-4-hydroxy-2,3,4,5-tetrahydrodipicolinate + NADH + H(+). The catalysed reaction is (S)-2,3,4,5-tetrahydrodipicolinate + NADP(+) + H2O = (2S,4S)-4-hydroxy-2,3,4,5-tetrahydrodipicolinate + NADPH + H(+). It participates in amino-acid biosynthesis; L-lysine biosynthesis via DAP pathway; (S)-tetrahydrodipicolinate from L-aspartate: step 4/4. Catalyzes the conversion of 4-hydroxy-tetrahydrodipicolinate (HTPA) to tetrahydrodipicolinate. This is 4-hydroxy-tetrahydrodipicolinate reductase from Shewanella frigidimarina (strain NCIMB 400).